Reading from the N-terminus, the 2211-residue chain is Norsolorinic acid synthase stcA (2211 aa).

Residues 11–251 (FLFGDQTYDF…REIPIYVPAH (241 aa)) form a starter unit:ACP transacylase (SAT) domain region. Residues 358 to 378 (PAEPPTSINKTPERYSHRPGS) form a disordered region. The span at 368–378 (TPERYSHRPGS) shows a compositional bias: basic and acidic residues. One can recognise a Ketosynthase family 3 (KS3) domain in the interval 380–812 (RGKLAIVSMS…GGNTAVLVED (433 aa)). Residues Cys-552, His-687, and His-730 each act as for beta-ketoacyl synthase activity in the active site. The malonyl-CoA:ACP transacylase (MAT) domain stretch occupies residues 912 to 1201 (IACSGQGSQY…MAGMIKTTLD (290 aa)). The active-site For acyl/malonyl transferase activity is Ser-1004. Residues 1289–1316 (TATSDYQLPSDEQVAAKRPSKQDESKEA) form a disordered region. Residues 1327 to 1468 (HRVVEEKTEP…CTVRFTSEAQ (142 aa)) are N-terminal hotdog fold. Residues 1327 to 1643 (HRVVEEKTEP…LRRVPRRGLR (317 aa)) enclose the PKS/mFAS DH domain. The product template (PT) domain stretch occupies residues 1340 to 1643 (TLVVETDISR…LRRVPRRGLR (304 aa)). The Proton acceptor; for dehydratase activity role is filled by His-1359. The segment at 1495–1643 (FIRYTTKSGY…LRRVPRRGLR (149 aa)) is C-terminal hotdog fold. Asp-1555 functions as the Proton donor; for dehydratase activity in the catalytic mechanism. A disordered region spans residues 1655–1706 (RLHGNQQAVKTQAPQRAALKQKPQSSPTQPHASKVAYSRSATSPTAGKPVVA). Polar residues-rich tracts occupy residues 1658-1668 (GNQQAVKTQAP) and 1676-1685 (KPQSSPTQPH). 2 consecutive Carrier domains span residues 1712-1791 (REGD…SGSA) and 1839-1915 (DELF…GTTS). An O-(pantetheine 4'-phosphoryl)serine mark is found at Ser-1749 and Ser-1873. A compositionally biased stretch (low complexity) spans 1912–1926 (GTTSGSTTGSSGSGS). The disordered stretch occupies residues 1912 to 1947 (GTTSGSTTGSSGSGSSEDETDSIPSTPEEYTTADTR). The segment covering 1934-1945 (IPSTPEEYTTAD) has biased composition (polar residues). The tract at residues 1969–2205 (ILFMLPDGGG…KEHVYLVREL (237 aa)) is thioesterase/Claisen cyclase (TE/CLC) domain. Ser-2039 acts as the For thioesterase activity in catalysis.

It depends on pantetheine 4'-phosphate as a cofactor.

It catalyses the reaction hexanoyl-[ACP] + 7 malonyl-CoA + 6 H(+) = noranthrone + holo-[ACP] + 7 CO2 + 7 CoA + 2 H2O. It participates in mycotoxin biosynthesis; sterigmatocystin biosynthesis. Non-reducing polyketide synthase; part of the gene cluster that mediates the biosynthesis of sterigmatocystin (ST), a polyketide-derived furanocoumarin which is part of the most toxic and carcinogenic compounds among the known mycotoxins. The first step in the biosynthesis of sterigmatocystin is the production of hexanoate by the fatty acid synthase (FAS) units stcJ and stcK. The polyketide backbone is assembled by the non-reducing polyketide synthase stcA by condensation of the starter hexanoyl-CoA and 7 malonyl-CoA extender units followed by cyclization and release of norsolorinic acid. Norsolorinic acid is the first stable intermediate in the biosynthesis of sterigmatocystin and is converted into averantin (AVN) by the ketoreductase stcE which reduces the hexanoate ketone to an alcohol. Averantin is then oxidized into 5'-hydroxyaverantin (HAVN) by the cytochrome P450 monooxygenase stcF. 5'-hydroxyaverantin is further converted to 5'-oxyaverantin (OAVN) by the 5'-hydroxyaverantin dehydrogenase stcG. The next step is the conversion of OAVN into averufin (AVF) which is catalyzed by a yet to be identified enzyme. The cytochrome P450 monooxygenase stcB and the flavin-binding monooxygenase stcW are both required for the conversion of averufin to 1-hydroxyversicolorone. The esterase stcI probably catalyzes the formation of versiconal hemiacetal acetate from 1-hydroxyversicolorone. The oxydoreductase stcN then probably catalyzes the biosynthetic step from versiconal to versicolorin B (VERB). The next step is performed by the versicolorin B desaturase stcL to produce versicolorin A (VERA). The ketoreductase stcU and the cytochrome P450 monooxygenase stcS are involved in the conversion of versicolorin A to demethylsterigmatocystin. The Baeyer-Villiger oxidas stcQ and the reductase stcR might be involved in the biosynthetic step from versicolorin A to demethylsterigmatocystin. The final step in the biosynthesis of sterigmatocystin is the methylation of demethylsterigmatocystin catalyzed by the methyltransferase stcP. The sequence is that of Norsolorinic acid synthase stcA from Emericella nidulans (strain FGSC A4 / ATCC 38163 / CBS 112.46 / NRRL 194 / M139) (Aspergillus nidulans).